The following is a 131-amino-acid chain: Profilin (131 aa).

It belongs to the profilin family. As to quaternary structure, occurs in many kinds of cells as a complex with monomeric actin in a 1:1 ratio.

The protein resides in the cytoplasm. It localises to the cytoskeleton. Its function is as follows. Binds to actin and affects the structure of the cytoskeleton. At high concentrations, profilin prevents the polymerization of actin, whereas it enhances it at low concentrations. By binding to PIP2, it inhibits the formation of IP3 and DG. The sequence is that of Profilin from Capsicum annuum (Capsicum pepper).